The sequence spans 664 residues: Protein-arginine deiminase type-3 (664 aa).

Belongs to the protein arginine deiminase family. Ca(2+) serves as cofactor. As to expression, epidermis and hair follicles.

It is found in the cytoplasm. The enzyme catalyses L-arginyl-[protein] + H2O = L-citrullyl-[protein] + NH4(+). In terms of biological role, catalyzes the deimination of arginine residues of proteins. The protein is Protein-arginine deiminase type-3 (Padi3) of Mus musculus (Mouse).